The chain runs to 144 residues: Large ribosomal subunit protein uL13 (144 aa).

The protein belongs to the universal ribosomal protein uL13 family. Part of the 50S ribosomal subunit.

This protein is one of the early assembly proteins of the 50S ribosomal subunit, although it is not seen to bind rRNA by itself. It is important during the early stages of 50S assembly. This chain is Large ribosomal subunit protein uL13, found in Magnetococcus marinus (strain ATCC BAA-1437 / JCM 17883 / MC-1).